The following is a 365-amino-acid chain: UDP-galactose transporter homolog 1 (365 aa).

The next 2 helical transmembrane spans lie at Ile42–Leu62 and Ala80–Leu100. Asn115 carries N-linked (GlcNAc...) asparagine glycosylation. Helical transmembrane passes span Tyr182–Pro202 and Ser206–Leu226. An N-linked (GlcNAc...) asparagine glycan is attached at Asn231. The next 4 membrane-spanning stretches (helical) occupy residues Val249–Ser269, Asp289–Glu309, Val315–Phe335, and Leu339–Trp359.

The protein belongs to the nucleotide-sugar transporter family. SLC35B subfamily.

It is found in the endoplasmic reticulum membrane. In terms of biological role, may be involved in specific transport of UDP-Gal from the cytosol to the Golgi lumen. Involved in the maintenance of optimal conditions for the folding of secretory pathway proteins in the endoplasmic reticulum. In Yarrowia lipolytica (strain CLIB 122 / E 150) (Yeast), this protein is UDP-galactose transporter homolog 1 (HUT1).